Consider the following 296-residue polypeptide: Elongation factor Ts (296 aa).

Positions 82–85 (TDFV) are involved in Mg(2+) ion dislocation from EF-Tu.

The protein belongs to the EF-Ts family.

The protein localises to the cytoplasm. Associates with the EF-Tu.GDP complex and induces the exchange of GDP to GTP. It remains bound to the aminoacyl-tRNA.EF-Tu.GTP complex up to the GTP hydrolysis stage on the ribosome. The sequence is that of Elongation factor Ts from Coxiella burnetii (strain CbuG_Q212) (Coxiella burnetii (strain Q212)).